The sequence spans 68 residues: Protein VNG_1110C (68 aa).

The protein is Protein VNG_1110C of Halobacterium salinarum (strain ATCC 700922 / JCM 11081 / NRC-1) (Halobacterium halobium).